The primary structure comprises 429 residues: Glutamate-1-semialdehyde 2,1-aminomutase 2 (429 aa).

The residue at position 268 (lysine 268) is an N6-(pyridoxal phosphate)lysine.

This sequence belongs to the class-III pyridoxal-phosphate-dependent aminotransferase family. HemL subfamily. As to quaternary structure, homodimer. Pyridoxal 5'-phosphate is required as a cofactor.

It localises to the cytoplasm. The catalysed reaction is (S)-4-amino-5-oxopentanoate = 5-aminolevulinate. It participates in porphyrin-containing compound metabolism; protoporphyrin-IX biosynthesis; 5-aminolevulinate from L-glutamyl-tRNA(Glu): step 2/2. The sequence is that of Glutamate-1-semialdehyde 2,1-aminomutase 2 from Bacillus anthracis (strain A0248).